A 215-amino-acid polypeptide reads, in one-letter code: UPF0502 protein YceH (215 aa).

Residue Lys-80 is modified to N6-acetyllysine.

The protein belongs to the UPF0502 family.

The polypeptide is UPF0502 protein YceH (Escherichia coli O7:K1 (strain IAI39 / ExPEC)).